The chain runs to 504 residues: Cytochrome P450 2K1 (504 aa).

Heme is bound at residue Cys447.

This sequence belongs to the cytochrome P450 family. It depends on heme as a cofactor.

The protein resides in the endoplasmic reticulum membrane. It localises to the microsome membrane. It catalyses the reaction an organic molecule + reduced [NADPH--hemoprotein reductase] + O2 = an alcohol + oxidized [NADPH--hemoprotein reductase] + H2O + H(+). This Oncorhynchus mykiss (Rainbow trout) protein is Cytochrome P450 2K1 (cyp2k1).